Consider the following 346-residue polypeptide: Galanin receptor type 1 (346 aa).

Residues 1 to 33 (MELAPVNLSEGNGSDPEPPAEPRPLFGIGVENF) lie on the Extracellular side of the membrane. N-linked (GlcNAc...) asparagine glycosylation is found at Asn-7 and Asn-12. A helical transmembrane segment spans residues 34-54 (ITLVVFGLIFAMGVLGNSLVI). The Cytoplasmic segment spans residues 55 to 69 (TVLARSKPGKPRSTT). Residues 70–90 (NLFILNLSIADLAYLLFCIPF) form a helical membrane-spanning segment. Topologically, residues 91–108 (QATVYALPTWVLGAFICK) are extracellular. Residues Cys-107 and Cys-185 are joined by a disulfide bond. A helical membrane pass occupies residues 109–130 (FIHYFFTVSMLVSIFTLAAMSV). Residues 131–150 (DRYVAIVHSRRSSSLRVSRN) are Cytoplasmic-facing. The chain crosses the membrane as a helical span at residues 151 to 171 (ALLGVGFIWALSIAMASPVAY). The Extracellular segment spans residues 172-196 (YQRLFHRDSNQTFCWEHWPNQLHKK). Asn-181 is a glycosylation site (N-linked (GlcNAc...) asparagine). A helical membrane pass occupies residues 197–217 (AYVVCTFVFGYLLPLLLICFC). Residues 218–246 (YAKVLNHLHKKLKNMSKKSEASKKKTAQT) lie on the Cytoplasmic side of the membrane. The chain crosses the membrane as a helical span at residues 247–267 (VLVVVVVFGISWLPHHVIHLW). The Extracellular segment spans residues 268 to 269 (AE). The helical transmembrane segment at 270-290 (FGAFPLTPASFFFRITAHCLA) threads the bilayer. Over 291-346 (YSNSSVNPIIYAFLSENFRKAYKQVFKCRVCNESPHGDAKEKNRIDTPPSTNCTHV) the chain is Cytoplasmic. Cys-318 is lipidated: S-palmitoyl cysteine. Residues 326 to 335 (HGDAKEKNRI) are compositionally biased toward basic and acidic residues. Residues 326-346 (HGDAKEKNRIDTPPSTNCTHV) form a disordered region.

This sequence belongs to the G-protein coupled receptor 1 family. Interacts with GRP39 AND HTR1A. Post-translationally, three cysteine residues are found in the C-terminus, at least one of which may be palmitoylated. Spinal cord, small intestine, Rin14B insulinoma cells and several brain regions, particularly ventral hippocampus, amygdala, supraoptic nucleus, hypothalamus, thalamus, lateral parabrachial nucleus and locus coeruleus.

The protein resides in the cell membrane. Its function is as follows. Receptor for the hormone galanin. The activity of this receptor is mediated by G proteins that inhibit adenylate cyclase activity. In Rattus norvegicus (Rat), this protein is Galanin receptor type 1 (Galr1).